The following is a 232-amino-acid chain: uncharacterized protein (232 aa).

The tract at residues 1–46 is disordered; the sequence is MNAHNMRGPPGDLAKVVPGSRSGWNEGSRCRQADKGDGQCRNGGRD. Residues 28 to 46 show a composition bias toward basic and acidic residues; sequence SRCRQADKGDGQCRNGGRD.

This is an uncharacterized protein from Rhizobium meliloti (Ensifer meliloti).